A 494-amino-acid polypeptide reads, in one-letter code: Histidine--tRNA ligase (494 aa).

The interval 1 to 20 (MAKDQKKQPRPKAETPKGFR) is disordered.

Belongs to the class-II aminoacyl-tRNA synthetase family. As to quaternary structure, homodimer.

Its subcellular location is the cytoplasm. It catalyses the reaction tRNA(His) + L-histidine + ATP = L-histidyl-tRNA(His) + AMP + diphosphate + H(+). This chain is Histidine--tRNA ligase, found in Paracoccus denitrificans (strain Pd 1222).